A 197-amino-acid chain; its full sequence is Ribosomal RNA large subunit methyltransferase E (197 aa).

Residues G52, W54, D72, D88, and D112 each contribute to the S-adenosyl-L-methionine site. K152 functions as the Proton acceptor in the catalytic mechanism.

It belongs to the class I-like SAM-binding methyltransferase superfamily. RNA methyltransferase RlmE family.

The protein localises to the cytoplasm. It carries out the reaction uridine(2552) in 23S rRNA + S-adenosyl-L-methionine = 2'-O-methyluridine(2552) in 23S rRNA + S-adenosyl-L-homocysteine + H(+). In terms of biological role, specifically methylates the uridine in position 2552 of 23S rRNA at the 2'-O position of the ribose in the fully assembled 50S ribosomal subunit. This is Ribosomal RNA large subunit methyltransferase E from Nitrosopumilus maritimus (strain SCM1).